A 262-amino-acid chain; its full sequence is Trypsin theta (262 aa).

The first 19 residues, 1-19 (MHGLVVLLVCLAVGSAFAG), serve as a signal peptide directing secretion. The propeptide at 20–34 (TIGVSNADPFEREGR) is activation peptide. In terms of domain architecture, Peptidase S1 spans 35 to 260 (IVGGEDTTIR…LRKWILNASQ (226 aa)). The cysteines at positions 61 and 77 are disulfide-linked. Catalysis depends on charge relay system residues His76 and Asp121. 2 disulfides stabilise this stretch: Cys186–Cys203 and Cys212–Cys236. Residue Ser216 is the Charge relay system of the active site.

This sequence belongs to the peptidase S1 family.

It localises to the secreted. It is found in the extracellular space. It catalyses the reaction Preferential cleavage: Arg-|-Xaa, Lys-|-Xaa.. The chain is Trypsin theta (thetaTry) from Drosophila erecta (Fruit fly).